Reading from the N-terminus, the 1809-residue chain is Pyochelin synthetase PchF (1809 aa).

Residues 69–490 (FPLTPVQAAY…GLLRRLAQSP (422 aa)) are condensation/cyclization. The interval 520–915 (FAERALLTPD…GREDDQVKIR (396 aa)) is adenylation. The Carrier domain occupies 1407-1488 (APADELESAL…GLAERLRSAP (82 aa)). Residue serine 1442 is modified to O-(pantetheine 4'-phosphoryl)serine. A thioesterase region spans residues 1584-1797 (LGRRYAEALH…FDCLGEALAQ (214 aa)).

The protein belongs to the NRP synthetase family. Requires pantetheine 4'-phosphate as cofactor.

It catalyses the reaction holo-[peptidyl-carrier protein] + L-cysteine + ATP = L-cysteinyl-[peptidyl-carrier protein] + AMP + diphosphate. It participates in siderophore biosynthesis. In terms of biological role, involved in the biosynthesis of the siderophore pyochelin. Adenylates L-cysteine and loads it onto its peptidyl carrier domain via a thioester linkage to the phosphopanthetheine moiety. Then forms a peptide bond between the salicyl-thiazolinyl intermediate bound to the second carrier domain of PchE and the cysteine bound to its own peptidyl carrier domain to form the salicyl-thiazolinyl-cysteinyl-S-PCP2 intermediate. It subsequently cyclizes the C-terminal cysteine to form the second thiazoline heterocycle in the salicyl-thiazolinyl-thiazolinyl-S-PCP2 intermediate. When this intermediate is released by the action of a thioesterase, it produces the tricyclic acid hydroxyphenyl-thiazolyl-thiazolinyl-carboxylic acid (HPTT-COOH), an advanced intermediate containing the aryl-4,2-bis-heterocyclic skeleton of the bithiazoline class of siderophores. In Pseudomonas aeruginosa (strain UCBPP-PA14), this protein is Pyochelin synthetase PchF.